Here is a 464-residue protein sequence, read N- to C-terminus: DNA primase DnaG (464 aa).

A Toprim domain is found at 171 to 245 (DTIIIVEGRA…DIDYVARAPK (75 aa)). Residues Glu-177, Asp-219, and Asp-221 each coordinate Mg(2+).

The protein belongs to the archaeal DnaG primase family. Forms a ternary complex with MCM helicase and DNA. The cofactor is Mg(2+).

It carries out the reaction ssDNA + n NTP = ssDNA/pppN(pN)n-1 hybrid + (n-1) diphosphate.. Functionally, RNA polymerase that catalyzes the synthesis of short RNA molecules used as primers for DNA polymerase during DNA replication. The sequence is that of DNA primase DnaG from Methanococcus aeolicus (strain ATCC BAA-1280 / DSM 17508 / OCM 812 / Nankai-3).